The chain runs to 289 residues: Acetyl-coenzyme A carboxylase carboxyl transferase subunit beta (289 aa).

The CoA carboxyltransferase N-terminal domain maps to 28-289 (VMTKCPKCKK…QGGEMAVWQS (262 aa)). Residues C32, C35, C51, and C54 each coordinate Zn(2+). The segment at 32–54 (CPKCKKIMYTKEVLKNLKVCVNC) adopts a C4-type zinc-finger fold.

It belongs to the AccD/PCCB family. In terms of assembly, acetyl-CoA carboxylase is a heterohexamer composed of biotin carboxyl carrier protein (AccB), biotin carboxylase (AccC) and two subunits each of ACCase subunit alpha (AccA) and ACCase subunit beta (AccD). Zn(2+) serves as cofactor.

The protein localises to the cytoplasm. The enzyme catalyses N(6)-carboxybiotinyl-L-lysyl-[protein] + acetyl-CoA = N(6)-biotinyl-L-lysyl-[protein] + malonyl-CoA. Its pathway is lipid metabolism; malonyl-CoA biosynthesis; malonyl-CoA from acetyl-CoA: step 1/1. Functionally, component of the acetyl coenzyme A carboxylase (ACC) complex. Biotin carboxylase (BC) catalyzes the carboxylation of biotin on its carrier protein (BCCP) and then the CO(2) group is transferred by the transcarboxylase to acetyl-CoA to form malonyl-CoA. This is Acetyl-coenzyme A carboxylase carboxyl transferase subunit beta from Bacillus cereus (strain ZK / E33L).